The primary structure comprises 515 residues: Maturase K (515 aa).

This sequence belongs to the intron maturase 2 family. MatK subfamily.

Its subcellular location is the plastid. The protein localises to the chloroplast. In terms of biological role, usually encoded in the trnK tRNA gene intron. Probably assists in splicing its own and other chloroplast group II introns. This Zingiber mioga (Myoga ginger) protein is Maturase K.